Here is a 276-residue protein sequence, read N- to C-terminus: BES1/BZR1 homolog protein 1 (276 aa).

3 disordered regions span residues 1 to 30, 76 to 125, and 155 to 191; these read MTAS…RERR, TTYR…PTRF, and SAPV…PTRR. Residues 14 to 87 are required for DNA-binding; that stretch reads RMPTWKEREN…YRKGSRPTET (74 aa). Polar residues predominate over residues 84-103; it reads PTETTVPCSSIQLSPQSSAF. The segment covering 104-122 has biased composition (low complexity); it reads QSPIPSYQASPSSSSYPSP. T159 carries the phosphothreonine modification. A compositionally biased stretch (low complexity) spans 164-174; sequence SPRRSNPRLPR. Positions 175–189 are enriched in polar residues; it reads WQSSNFPVSAPSSPT.

The protein belongs to the BZR/LAT61 family. In terms of processing, phosphorylated. Phosphorylation increases protein degradation.

The sequence is that of BES1/BZR1 homolog protein 1 (BEH1) from Arabidopsis thaliana (Mouse-ear cress).